Here is a 342-residue protein sequence, read N- to C-terminus: MISLKGISKTFKTKNGAVQAVDNVNLEIEAGQIFGIIGYSGAGKSTLIRLLNLLEKPTEGSVKIDGKALSSLTPSKLRAARQEIGMIFQHFNLLWSRTVRQNISFPLEVAGVPAAQRKKRVEELIELVGLHGRGDSYPSQLSGGQKQRVGIARALANNPKVLLCDEATSALDPKTTDSILDLLLDINEKLNLTIVLITHEMHVIQKICHQVAVMENGKIVEQGPVIDVFRKPKEQMTKEFVKQLAQTGEEEQSLWHLLDEKSDGTIVSLTFVGNPAEEQLVTELIRRFPIDISILQGNISKLQQGSYGKLYLRLLGATNEIEAALAYIRGKEIDVEVIEHDR.

In terms of domain architecture, ABC transporter spans 2-241 (ISLKGISKTF…PKEQMTKEFV (240 aa)). ATP is bound at residue 38-45 (GYSGAGKS).

This sequence belongs to the ABC transporter superfamily. Methionine importer (TC 3.A.1.24) family. As to quaternary structure, the complex is composed of two ATP-binding proteins (MetN), two transmembrane proteins (MetI) and a solute-binding protein (MetQ).

The protein localises to the cell membrane. It catalyses the reaction L-methionine(out) + ATP + H2O = L-methionine(in) + ADP + phosphate + H(+). It carries out the reaction D-methionine(out) + ATP + H2O = D-methionine(in) + ADP + phosphate + H(+). In terms of biological role, part of the ABC transporter complex MetNIQ involved in methionine import. Responsible for energy coupling to the transport system. The polypeptide is Methionine import ATP-binding protein MetN 3 (Shouchella clausii (strain KSM-K16) (Alkalihalobacillus clausii)).